The following is a 343-amino-acid chain: Anthranilate phosphoribosyltransferase (343 aa).

5-phospho-alpha-D-ribose 1-diphosphate-binding positions include Gly-84, 87–88 (GD), Thr-92, 94–97 (NIST), 112–120 (KHGNRGVSS), and Ser-124. Anthranilate is bound at residue Gly-84. Ser-96 is a binding site for Mg(2+). Asn-115 provides a ligand contact to anthranilate. An anthranilate-binding site is contributed by Arg-170. Residues Asp-229 and Glu-230 each contribute to the Mg(2+) site.

Belongs to the anthranilate phosphoribosyltransferase family. As to quaternary structure, homodimer. Requires Mg(2+) as cofactor.

The catalysed reaction is N-(5-phospho-beta-D-ribosyl)anthranilate + diphosphate = 5-phospho-alpha-D-ribose 1-diphosphate + anthranilate. Its pathway is amino-acid biosynthesis; L-tryptophan biosynthesis; L-tryptophan from chorismate: step 2/5. Functionally, catalyzes the transfer of the phosphoribosyl group of 5-phosphorylribose-1-pyrophosphate (PRPP) to anthranilate to yield N-(5'-phosphoribosyl)-anthranilate (PRA). In Burkholderia vietnamiensis (strain G4 / LMG 22486) (Burkholderia cepacia (strain R1808)), this protein is Anthranilate phosphoribosyltransferase.